The chain runs to 257 residues: Imidazole glycerol phosphate synthase subunit HisF (257 aa).

Active-site residues include Asp-11 and Asp-130.

It belongs to the HisA/HisF family. As to quaternary structure, heterodimer of HisH and HisF.

It localises to the cytoplasm. It carries out the reaction 5-[(5-phospho-1-deoxy-D-ribulos-1-ylimino)methylamino]-1-(5-phospho-beta-D-ribosyl)imidazole-4-carboxamide + L-glutamine = D-erythro-1-(imidazol-4-yl)glycerol 3-phosphate + 5-amino-1-(5-phospho-beta-D-ribosyl)imidazole-4-carboxamide + L-glutamate + H(+). The protein operates within amino-acid biosynthesis; L-histidine biosynthesis; L-histidine from 5-phospho-alpha-D-ribose 1-diphosphate: step 5/9. In terms of biological role, IGPS catalyzes the conversion of PRFAR and glutamine to IGP, AICAR and glutamate. The HisF subunit catalyzes the cyclization activity that produces IGP and AICAR from PRFAR using the ammonia provided by the HisH subunit. This Prochlorococcus marinus (strain SARG / CCMP1375 / SS120) protein is Imidazole glycerol phosphate synthase subunit HisF.